The following is a 441-amino-acid chain: C4-dicarboxylate transport protein (441 aa).

Residues 1-30 (MIIEHSAEVRGKTPLYRHLYVQVLAAIAAG) lie on the Cytoplasmic side of the membrane. Residues 31-49 (ILLGHFYPDIGTELKPLGD) traverse the membrane as a helical segment. Residues 50 to 68 (AFIRLVKMIIAPVIFLTVA) lie on the Periplasmic side of the membrane. Residues 69 to 87 (TGIAGMTDLAKVGRVAGKA) form a helical membrane-spanning segment. Residues 88–99 (MIYFLAFSTLAL) lie on the Cytoplasmic side of the membrane. The chain crosses the membrane as a helical span at residues 100–118 (VVGLVVANVVQPGAGMHID). Residues 119-149 (PASLDAKAVATYAEKAHEQSITGFLMNIIPT) lie on the Periplasmic side of the membrane. The helical transmembrane segment at 150–168 (TLVGAFAEGDILQVLFISV) threads the bilayer. Over 169-171 (LFG) the chain is Cytoplasmic. A helical transmembrane segment spans residues 172 to 190 (ISLAIVGKKAEPVVDFLQA). Residues 191 to 209 (LTLPIFRLVAILMKAAPIG) are Periplasmic-facing. Residues 210–228 (AFGAMAFTIGKYGIASIAN) traverse the membrane as a helical segment. The Cytoplasmic portion of the chain corresponds to 229-241 (LAMLIGTFYLTSF). Residues 242–260 (LFVFIVLGAVARYNGFSIL) traverse the membrane as a helical segment. The Periplasmic portion of the chain corresponds to 261–281 (SLIRYIKEELLLVLGTSSSEA). A helical transmembrane segment spans residues 282 to 300 (ALPGLMNKMEKAGCKRSVV). Topologically, residues 301 to 320 (GLVIPTGYSFNLDGTNIYMT) are cytoplasmic. Residues 321–339 (LAALFIAQATDTPLSYGDQ) traverse the membrane as a helical segment. At 340-350 (ILLLLVAMLSS) the chain is on the periplasmic side. Residues 351–369 (KGAAGITGAGFITLAATLS) form a helical membrane-spanning segment. Residues 370–378 (VVPSVPVAG) are Cytoplasmic-facing. The helical transmembrane segment at 379–398 (MALILGIDRFMSECRALTNF) threads the bilayer. The Periplasmic portion of the chain corresponds to 399-405 (VGNAVAT). The chain crosses the membrane as a helical span at residues 406-424 (IVVAKWEGELDQAQLSAAL). The Cytoplasmic segment spans residues 425–441 (GGEASVEAIPAVVQPAE).

It belongs to the dicarboxylate/amino acid:cation symporter (DAACS) (TC 2.A.23) family.

The protein resides in the cell inner membrane. Its function is as follows. Responsible for the transport of dicarboxylates such as succinate, fumarate, and malate from the periplasm across the inner membrane. This transport system plays an important role in the energy supply of rhizobium-legume symbionts. In Rhizobium meliloti (strain 1021) (Ensifer meliloti), this protein is C4-dicarboxylate transport protein (dctA).